The primary structure comprises 576 residues: DNA mismatch repair protein MutL (576 aa).

The protein belongs to the DNA mismatch repair MutL/HexB family.

Its function is as follows. This protein is involved in the repair of mismatches in DNA. It is required for dam-dependent methyl-directed DNA mismatch repair. May act as a 'molecular matchmaker', a protein that promotes the formation of a stable complex between two or more DNA-binding proteins in an ATP-dependent manner without itself being part of a final effector complex. This Chlamydia trachomatis serovar L2 (strain ATCC VR-902B / DSM 19102 / 434/Bu) protein is DNA mismatch repair protein MutL.